Reading from the N-terminus, the 322-residue chain is Dioxygenase himG (322 aa).

2 residues coordinate Fe cation: H148 and H229.

The protein belongs to the PhyH family. Homodimer. Requires Fe cation as cofactor.

It participates in secondary metabolite biosynthesis. Polyketide synthase-nonribosomal peptide synthetase; part of the him gene cluster that mediates the biosynthesis of himeic acid A, a ubiquitin-activating enzyme (E1) inhibitor. First, himA, together with the trans-enoyl reductase himH, catalyzes the formation of apolyketide chain, which is then condensed with leucine by the NRPS activity of himA. Dieckmann cyclization and release from himA gives a tetramic acid intermediate as the product of himA PKS-NRPS. HimG then catalyzes alpha-oxidation of the tetramic acid ring, with a subsequent rearrangement to yield apyrone intermediate. Two terminal methyl groups of polyketide and amide side chains are oxidized to carboxylic acids by himC cytochrome P450 monooxygenase to form himeic acid A. Himeic acid A is further converted to himeic acid B and C during culture growth. No gene responsible for pyrone to pyridone conversion was found in the him gene cluster and himeic acid A is non-enzymatically converted to himeic acid C by the incorporation of an ammonium nitrogen atom in a pH5 buffer, and to himeic acid B at a conversion ratio of 50% during incubation in MeOH for 5 days. The sequence is that of Dioxygenase himG from Aspergillus japonicus.